Consider the following 66-residue polypeptide: Large ribosomal subunit protein uL29 (66 aa).

It belongs to the universal ribosomal protein uL29 family.

The chain is Large ribosomal subunit protein uL29 from Francisella tularensis subsp. tularensis (strain FSC 198).